A 736-amino-acid polypeptide reads, in one-letter code: MSNEGQCPFNHANGGGTTNRDWWPNELRLDLLSQHSSKTDPLDPGFNYAEAFNSLDLDALRKDLAALMTDSQDWWPADFGHYGPLFVRMAWHSAGTYRMGDGRGGAGRGQQRFAPLNSWPDNVSLDKARRLLWPIKQKYGQKISWADLLILTGDVALTTMGFKTFGYAGGREDTWEPDRDVYWGSETTWLGGDLRYDKGGACESQHGGNAGRNLENPLAAVQMGLIYVNPEGPDGNPDPVAAAYDIREVFGRMAMNDEETVALIAGGHAFGKTHGAGPADNVGLEPEAAGLEQQGLGWKNSFGTGKGADTITSGLEVTWSDTPTQWGMGFFKNLFGYEWELTKSPAGAHQWVAKNAEPTIPHAHDPSKKLLPTMLTTDLSLRFDPVYEKISRHFMDNPDVFADAFARAWFKLTHRDMGPRARYLGPDVPTEELIWQDPIPAVDHVLVDDTDVAPLKETILASGLSVAELVSTAWASASTFRGSDKRGGANGARIRLAPQKDWAVNEPARLAKVLKVLERIQGEFNSTQPGGKKISLADLIVLAGGAGIEQAAKRAGHDVVVPFAPGRMDASQEQTDAHSFAVLEPVADGFRNFVKGKFAVPAEALLIDKAQLLTLTAPQMTALVGGLRVLNVQTGDEKHGVFTDQPETLTVDFFRNLLDMATEWKPIAGEDTYEGRDRRTGELKWTGTRVDLVFGSNAVLRALSEVYASADGEAKFIRDFVAAWVKVMNLDRFDLA.

Residues 91-227 constitute a cross-link (tryptophyl-tyrosyl-methioninium (Trp-Tyr) (with M-253)); sequence WHSAGTYRMG…LAAVQMGLIY (137 aa). His92 functions as the Proton acceptor in the catalytic mechanism. A cross-link (tryptophyl-tyrosyl-methioninium (Tyr-Met) (with W-91)) is located at residues 227–253; it reads YVNPEGPDGNPDPVAAAYDIREVFGRM. His268 serves as a coordination point for heme b.

The protein belongs to the peroxidase family. Peroxidase/catalase subfamily. Homodimer or homotetramer. Heme b is required as a cofactor. In terms of processing, formation of the three residue Trp-Tyr-Met cross-link is important for the catalase, but not the peroxidase activity of the enzyme.

The catalysed reaction is H2O2 + AH2 = A + 2 H2O. It catalyses the reaction 2 H2O2 = O2 + 2 H2O. Bifunctional enzyme with both catalase and broad-spectrum peroxidase activity. Shows peroxidase specificity towards odianisidine, ABTS and pyrogallol, but methoxyphenol and 2-chloronaphthol are not peroxidized. The chain is Catalase-peroxidase 2 from Burkholderia cenocepacia (strain ATCC BAA-245 / DSM 16553 / LMG 16656 / NCTC 13227 / J2315 / CF5610) (Burkholderia cepacia (strain J2315)).